A 364-amino-acid polypeptide reads, in one-letter code: Chorismate synthase (364 aa).

R47 lines the NADP(+) pocket. FMN-binding positions include 125–127 (RAS), G288, 303–307 (KPTAT), and R329.

Belongs to the chorismate synthase family. Homotetramer. FMNH2 serves as cofactor.

The catalysed reaction is 5-O-(1-carboxyvinyl)-3-phosphoshikimate = chorismate + phosphate. The protein operates within metabolic intermediate biosynthesis; chorismate biosynthesis; chorismate from D-erythrose 4-phosphate and phosphoenolpyruvate: step 7/7. Functionally, catalyzes the anti-1,4-elimination of the C-3 phosphate and the C-6 proR hydrogen from 5-enolpyruvylshikimate-3-phosphate (EPSP) to yield chorismate, which is the branch point compound that serves as the starting substrate for the three terminal pathways of aromatic amino acid biosynthesis. This reaction introduces a second double bond into the aromatic ring system. This chain is Chorismate synthase, found in Synechococcus sp. (strain CC9902).